Consider the following 140-residue polypeptide: Endoribonuclease YbeY (140 aa).

Zn(2+) is bound by residues His-100, His-104, and His-110.

Belongs to the endoribonuclease YbeY family. Requires Zn(2+) as cofactor.

It is found in the cytoplasm. Its function is as follows. Single strand-specific metallo-endoribonuclease involved in late-stage 70S ribosome quality control and in maturation of the 3' terminus of the 16S rRNA. This is Endoribonuclease YbeY from Helicobacter pylori (strain P12).